The sequence spans 330 residues: Aspartate--ammonia ligase (330 aa).

The protein belongs to the class-II aminoacyl-tRNA synthetase family. AsnA subfamily.

Its subcellular location is the cytoplasm. It catalyses the reaction L-aspartate + NH4(+) + ATP = L-asparagine + AMP + diphosphate + H(+). It participates in amino-acid biosynthesis; L-asparagine biosynthesis; L-asparagine from L-aspartate (ammonia route): step 1/1. In Streptococcus pneumoniae serotype 19F (strain G54), this protein is Aspartate--ammonia ligase.